The chain runs to 467 residues: tRNA-2-methylthio-N(6)-dimethylallyladenosine synthase (467 aa).

Residues 4-124 (RKLFIKSYGC…LPEMVAKVER (121 aa)) enclose the MTTase N-terminal domain. Cys-13, Cys-49, Cys-87, Cys-161, Cys-165, and Cys-168 together coordinate [4Fe-4S] cluster. The Radical SAM core domain maps to 147–379 (QAHGPSAFLS…QARLVEIQQA (233 aa)). Positions 382–444 (QACVGRPMDV…SNSLAARLVE (63 aa)) constitute a TRAM domain.

Belongs to the methylthiotransferase family. MiaB subfamily. Monomer. [4Fe-4S] cluster is required as a cofactor.

It localises to the cytoplasm. It catalyses the reaction N(6)-dimethylallyladenosine(37) in tRNA + (sulfur carrier)-SH + AH2 + 2 S-adenosyl-L-methionine = 2-methylsulfanyl-N(6)-dimethylallyladenosine(37) in tRNA + (sulfur carrier)-H + 5'-deoxyadenosine + L-methionine + A + S-adenosyl-L-homocysteine + 2 H(+). Catalyzes the methylthiolation of N6-(dimethylallyl)adenosine (i(6)A), leading to the formation of 2-methylthio-N6-(dimethylallyl)adenosine (ms(2)i(6)A) at position 37 in tRNAs that read codons beginning with uridine. The polypeptide is tRNA-2-methylthio-N(6)-dimethylallyladenosine synthase (Rhodospirillum rubrum (strain ATCC 11170 / ATH 1.1.1 / DSM 467 / LMG 4362 / NCIMB 8255 / S1)).